The primary structure comprises 295 residues: Sulfotransferase 1A1 (295 aa).

48–53 (KSGTTW) is a binding site for 3'-phosphoadenylyl sulfate. 106 to 108 (KTH) lines the substrate pocket. The active-site Proton acceptor is the His108. 3'-phosphoadenylyl sulfate-binding positions include Arg130, Ser138, Tyr193, 227 to 232 (TSFKEM), and 255 to 259 (FMRKG). Ser138 carries the phosphoserine modification.

This sequence belongs to the sulfotransferase 1 family. As to quaternary structure, homodimer. Distal lung parenchyma.

Its subcellular location is the cytoplasm. The enzyme catalyses a phenol + 3'-phosphoadenylyl sulfate = an aryl sulfate + adenosine 3',5'-bisphosphate + H(+). The catalysed reaction is 17beta-estradiol + 3'-phosphoadenylyl sulfate = 17beta-estradiol 3-sulfate + adenosine 3',5'-bisphosphate + H(+). It carries out the reaction 4-ethylphenol + 3'-phosphoadenylyl sulfate = 4-ethylphenyl sulfate + adenosine 3',5'-bisphosphate + H(+). It catalyses the reaction 4-nitrophenol + 3'-phosphoadenylyl sulfate = 4-nitrophenyl sulfate + adenosine 3',5'-bisphosphate. The enzyme catalyses dopamine + 3'-phosphoadenylyl sulfate = dopamine 3-O-sulfate + adenosine 3',5'-bisphosphate + H(+). The catalysed reaction is dopamine + 3'-phosphoadenylyl sulfate = dopamine 4-O-sulfate + adenosine 3',5'-bisphosphate + H(+). It carries out the reaction 3,3',5-triiodo-L-thyronine + 3'-phosphoadenylyl sulfate = 3,3',5-triiodo-L-thyronine sulfate + adenosine 3',5'-bisphosphate + H(+). It catalyses the reaction 3,3',5'-triiodo-L-thyronine + 3'-phosphoadenylyl sulfate = 3,3',5'-triiodo-L-thyronine sulfate + adenosine 3',5'-bisphosphate + H(+). The enzyme catalyses 3,3'-diiodo-L-thyronine + 3'-phosphoadenylyl sulfate = 3,3'-diiodo-L-thyronine sulfate + adenosine 3',5'-bisphosphate + H(+). The catalysed reaction is L-thyroxine + 3'-phosphoadenylyl sulfate = L-thyroxine sulfate + adenosine 3',5'-bisphosphate + H(+). Its function is as follows. Sulfotransferase that utilizes 3'-phospho-5'-adenylyl sulfate (PAPS) as sulfonate donor to catalyze the sulfate conjugation of a wide variety of acceptor molecules bearing a hydroxyl or an amine group. Sulfonation increases the water solubility of most compounds, and therefore their renal excretion, but it can also result in bioactivation to form active metabolites. Displays broad substrate specificity for small phenolic compounds. Plays an important role in the sulfonation of endogenous molecules such as steroid hormones. Mediates also the metabolic activation of carcinogenic N-hydroxyarylamines leading to highly reactive intermediates capable of forming DNA adducts, potentially resulting in mutagenesis. May play a role in gut microbiota-host metabolic interaction. O-sulfonates 4-ethylphenol (4-EP), a dietary tyrosine-derived metabolite produced by gut bacteria. The product 4-EPS crosses the blood-brain barrier and may negatively regulate oligodendrocyte maturation and myelination, affecting the functional connectivity of different brain regions associated with the limbic system. Catalyzes the sulfate conjugation of dopamine. Catalyzes the sulfation of T4 (L-thyroxine/3,5,3',5'-tetraiodothyronine), T3 (3,5,3'-triiodothyronine), rT3 (3,3',5'-triiodothyronine) and 3,3'-T2 (3,3'-diiodothyronine), with a substrate preference of 3,3'-T2 &gt; rT3 &gt; T3 &gt; T4. This Bos taurus (Bovine) protein is Sulfotransferase 1A1 (SULT1A1).